The primary structure comprises 177 residues: Large ribosomal subunit protein uL6 (177 aa).

This sequence belongs to the universal ribosomal protein uL6 family. In terms of assembly, part of the 50S ribosomal subunit.

Its function is as follows. This protein binds to the 23S rRNA, and is important in its secondary structure. It is located near the subunit interface in the base of the L7/L12 stalk, and near the tRNA binding site of the peptidyltransferase center. The protein is Large ribosomal subunit protein uL6 of Pasteurella multocida (strain Pm70).